The sequence spans 1512 residues: DNA (cytosine-5)-methyltransferase 2 (1512 aa).

The segment covering 1 to 22 has biased composition (basic and acidic residues); sequence METKVGKQKKRSVDSNDDVSKE. Disordered regions lie at residues 1–35 and 634–678; these read METK…RNFK and AIHE…GNSE. The segment covering 638 to 662 has biased composition (acidic residues); it reads VEEEEIEEDEEEDENEEDDIEEEAV. 2 BAH domains span residues 707–841 and 909–1026; these read ETVA…FSLP and TTLK…KQFP. Residues 1071–1505 enclose the SAM-dependent MTase C5-type domain; sequence LATLDIFAGC…RKLKEALYLK (435 aa). Cysteine 1176 is a catalytic residue.

This sequence belongs to the class I-like SAM-binding methyltransferase superfamily. C5-methyltransferase family. Expressed at low levels in vegetative and floral organs.

The protein localises to the nucleus. It carries out the reaction a 2'-deoxycytidine in DNA + S-adenosyl-L-methionine = a 5-methyl-2'-deoxycytidine in DNA + S-adenosyl-L-homocysteine + H(+). Its function is as follows. Maintains chromatin CpG methylation that plays a role in genomic imprinting, regulation of embryogenesis and seed viability. Required for proper patterns of CG DNA methylation in dividing cells. In Arabidopsis thaliana (Mouse-ear cress), this protein is DNA (cytosine-5)-methyltransferase 2 (MET2).